Consider the following 461-residue polypeptide: Phenolic glucoside malonyltransferase 1 (461 aa).

The active-site Proton acceptor is histidine 167. The short motif at 167–171 is the HXXXD motif element; sequence HAAQD. Position 281–282 (281–282) interacts with malonyl-CoA; it reads ST. Aspartate 400 functions as the Proton acceptor in the catalytic mechanism. The DFGWG motif motif lies at 400–404; the sequence is DFGWG.

The protein belongs to the plant acyltransferase family. Phenolic glucoside malonyltransferase subfamily. In terms of tissue distribution, expressed in all tissues. Most highly expressed in the abdomen and especially in the gut.

It carries out the reaction a flavonol 3-O-beta-D-glucoside + malonyl-CoA = a flavonol 3-O-(6-O-malonyl-beta-D-glucoside) + CoA. The enzyme catalyses kaempferol 3-O-beta-D-glucoside + malonyl-CoA = kaempferol 3-O-(6-O-malonyl-beta-D-glucoside) + CoA. The catalysed reaction is quercetin 3-O-beta-D-glucoside + malonyl-CoA = quercetin 3-O-(6-O-malonyl-beta-D-glucoside) + CoA. It catalyses the reaction a flavonol 7-O-beta-D-glucoside + malonyl-CoA = a flavonol 7-O-(6-O-malonyl-beta-D-glucoside) + CoA. It carries out the reaction (2S)-naringenin 7-O-beta-D-glucoside + malonyl-CoA = (2S)-naringenin 7-O-(6-O-malonyl-beta-D-glucoside) + CoA. The enzyme catalyses kaempferol 7-O-beta-D-glucoside + malonyl-CoA = kaempferol 7-O-(6-O-malonyl-beta-D-glucoside) + CoA. The catalysed reaction is apigenin 7-O-beta-D-glucoside + malonyl-CoA = apigenin 7-O-(6-O-malonyl-beta-D-glucoside) + CoA. It catalyses the reaction rhaponticin + malonyl-CoA = 6-O-malonyl-rhaponticin + CoA. Its function is as follows. Phenolic glucoside malonyltransferase that neutralizes phenolic glycosides in host plants. Catalyzes the transfer of a malonyl group from malonyl-CoA to the phenolic glycosides, leading to their detoxification. Phenolic glycosides, which are among the most abundant plant secondary metabolites, act as plant defense compounds: they strongly affect growth, development and behavior of insect herbivores. Has malonyltransferase activity against flavonoids kaempferol 3-O-glucoside, kaempferol 7-O-glucoside, isoquercetin (quercetin 3-O-beta-D-glucopyranoside), apigetrin (apigenin 7-O-beta-D-glucoside) and prunin (naringenin 7-O-beta-D-glucoside). Also has activity toward non-flavonoid rhaponticin, but with lower efficiency. The sequence is that of Phenolic glucoside malonyltransferase 1 from Bemisia tabaci (Sweetpotato whitefly).